Reading from the N-terminus, the 523-residue chain is 2-isopropylmalate synthase (523 aa).

Residues 5 to 267 (VIIFDTTLRD…HTAINHQEIW (263 aa)) form the Pyruvate carboxyltransferase domain. Residues D14, H202, H204, and N238 each contribute to the Mn(2+) site. Positions 392–523 (RLDYFSVQSG…QHNENNKETV (132 aa)) are regulatory domain.

This sequence belongs to the alpha-IPM synthase/homocitrate synthase family. LeuA type 1 subfamily. Homodimer. Requires Mn(2+) as cofactor.

Its subcellular location is the cytoplasm. It catalyses the reaction 3-methyl-2-oxobutanoate + acetyl-CoA + H2O = (2S)-2-isopropylmalate + CoA + H(+). It functions in the pathway amino-acid biosynthesis; L-leucine biosynthesis; L-leucine from 3-methyl-2-oxobutanoate: step 1/4. In terms of biological role, catalyzes the condensation of the acetyl group of acetyl-CoA with 3-methyl-2-oxobutanoate (2-ketoisovalerate) to form 3-carboxy-3-hydroxy-4-methylpentanoate (2-isopropylmalate). In Shigella flexneri, this protein is 2-isopropylmalate synthase.